We begin with the raw amino-acid sequence, 384 residues long: MAKHLFTSESVSEGHPDKIADQISDAVLDAILQQDPKARVACETYVKTGMVLVGGEITTSAWVDIEEITRNTVREIGYVHSDMGFDANSCAVLSAIGKQSPDINQGVDRADPLEQGAGDQGLMFGYATNETDVLMPAPITYAHRLVQRQAEVRKNGTLPWLRPDAKSQVTFQYDDGKIVGIDAVVLSTQHAEDIDQKSLQEAVMEEIIKPILPSEWLNTSTKFFINPTGRFVIGGPMGDCGLTGRKIIVDTYGGMARHGGGAFSGKDPSKVDRSAAYAARYVAKNIVAAGLADRCEIQVSYAIGVAEPTSIMVETFGTEKVSSEQLTLLVREFFDLRPYGLIQMLDLLHPIYKETAAYGHFGRENFPWEKTDKAQLLRDAAGLK.

Residue H15 participates in ATP binding. Residue D17 participates in Mg(2+) binding. E43 contributes to the K(+) binding site. L-methionine-binding residues include E56 and Q99. Positions 99-109 (QSPDINQGVDR) are flexible loop. ATP is bound by residues 164 to 166 (DAK), 230 to 231 (RF), D239, 245 to 246 (RK), A262, and K266. D239 provides a ligand contact to L-methionine. K270 serves as a coordination point for L-methionine.

Belongs to the AdoMet synthase family. Homotetramer; dimer of dimers. Mg(2+) is required as a cofactor. Requires K(+) as cofactor.

The protein resides in the cytoplasm. The catalysed reaction is L-methionine + ATP + H2O = S-adenosyl-L-methionine + phosphate + diphosphate. The protein operates within amino-acid biosynthesis; S-adenosyl-L-methionine biosynthesis; S-adenosyl-L-methionine from L-methionine: step 1/1. Its function is as follows. Catalyzes the formation of S-adenosylmethionine (AdoMet) from methionine and ATP. The overall synthetic reaction is composed of two sequential steps, AdoMet formation and the subsequent tripolyphosphate hydrolysis which occurs prior to release of AdoMet from the enzyme. This chain is S-adenosylmethionine synthase, found in Salmonella arizonae (strain ATCC BAA-731 / CDC346-86 / RSK2980).